Consider the following 247-residue polypeptide: PHD finger protein ALFIN-LIKE 3 (247 aa).

Residues 147 to 178 (DRSGVDSSGKSKHSTKRTGEGQVKRSRVVAEE) form a disordered region. Residues 188–240 (ETFCGTCGGLYNANEFWIGCDICERWFHGKCVRITPAKAEHIKHYKCPDCSSS) form a PHD-type zinc finger.

It belongs to the Alfin family. In terms of assembly, interacts with H3K4me3 and to a lesser extent with H3K4me2.

The protein resides in the nucleus. In terms of biological role, histone-binding component that specifically recognizes H3 tails trimethylated on 'Lys-4' (H3K4me3), which mark transcription start sites of virtually all active genes. In Oryza sativa subsp. indica (Rice), this protein is PHD finger protein ALFIN-LIKE 3.